The sequence spans 189 residues: Elongation factor P (189 aa).

K34 is modified (N6-(3,6-diaminohexanoyl)-5-hydroxylysine).

This sequence belongs to the elongation factor P family. Post-translationally, may be beta-lysylated on the epsilon-amino group of Lys-34 by the combined action of EpmA and EpmB, and then hydroxylated on the C5 position of the same residue by EpmC (if this protein is present). Lysylation is critical for the stimulatory effect of EF-P on peptide-bond formation. The lysylation moiety may extend toward the peptidyltransferase center and stabilize the terminal 3-CCA end of the tRNA. Hydroxylation of the C5 position on Lys-34 may allow additional potential stabilizing hydrogen-bond interactions with the P-tRNA.

It localises to the cytoplasm. It participates in protein biosynthesis; polypeptide chain elongation. Involved in peptide bond synthesis. Alleviates ribosome stalling that occurs when 3 or more consecutive Pro residues or the sequence PPG is present in a protein, possibly by augmenting the peptidyl transferase activity of the ribosome. Modification of Lys-34 is required for alleviation. The polypeptide is Elongation factor P (Nitrosococcus oceani (strain ATCC 19707 / BCRC 17464 / JCM 30415 / NCIMB 11848 / C-107)).